The primary structure comprises 330 residues: MPSFVFKSRKLKHTTMQKNYDPRIAQLRGFASLSVAFYHLWTLQILPLSIFRPGWLGVPLFLELSIFLLLQRLDVNSDMKKYFAKRIKRIYPLYYLSATAVFLVELYYFHDHVTIYELFLHYVFLSSVLAPFSFSYVFWTLQLEEWMYLFIPLIHRLSDMRKFLLAVGLILSSFIYGTFIVTLPYNEFHLLYFMPPFWLSAYGWGIIAYILYKNNTKLWSTRSAISFLFLIYVMYLLAPTDNEFLYELTTRVVVYNMVLVVFMLIILNPPKVLSKVSVFLGEISYGIYVWHLLMEELLGVVGILLGVAVAFATEFPLRRKEILLRLRQLG.

Transmembrane regions (helical) follow at residues 29–49 (GFAS…LPLS), 50–70 (IFRP…FLLL), 90–110 (IYPL…YYFH), 118–138 (LFLH…SYVF), 163–183 (FLLA…IVTL), 190–210 (LLYF…IAYI), 225–245 (ISFL…NEFL), 252–272 (VVVY…PPKV), 273–293 (LSKV…WHLL), and 297–317 (LLGV…EFPL).

It localises to the host membrane. In Acidianus convivator (ATV), this protein is Putative acetyltransferase ORF330.